Reading from the N-terminus, the 1741-residue chain is Protein wings apart-like (1741 aa).

Disordered regions lie at residues 68 to 100, 119 to 277, 291 to 472, 490 to 612, 675 to 810, 823 to 963, 1038 to 1068, 1112 to 1141, and 1708 to 1741; these read SPSQ…FFKS, CGAG…EVAA, SSTF…KPPK, KAAA…VQED, LAVL…ASVN, KAEA…QRGA, AAGK…STLR, SAAG…RVDR, and TSST…SSHR. Over residues 165–174 the composition is skewed to basic residues; the sequence is RKRKSPKKKA. Low complexity predominate over residues 175–185; it reads ATTSASTPSTP. Residue threonine 258 is modified to Phosphothreonine. Over residues 309-334 the composition is skewed to low complexity; it reads APSASASTSSQLPSASGSASNPPSAS. Serine 355 is subject to Phosphoserine. The span at 367–377 shows a compositional bias: polar residues; it reads AHQNQLNQLSV. The segment covering 408–426 has biased composition (low complexity); that stretch reads AADSVDGSSAAVGGASAGD. Residues 438–456 are compositionally biased toward acidic residues; sequence PNEDEEEEEEEEDEEEEPP. A compositionally biased stretch (basic residues) spans 503–512; sequence SRSKKHKHKQ. 2 stretches are compositionally biased toward low complexity: residues 515–529 and 553–568; these read AAGS…ATPA and QHTP…LHPQ. The segment covering 586-604 has biased composition (polar residues); it reads SQSSVLGSISSKGNSTPQL. Low complexity-rich tracts occupy residues 796 to 810 and 849 to 859; these read NAAA…ASVN and QQVTQVLQQEP. The span at 860 to 873 shows a compositional bias: acidic residues; sequence VPEEQETPDAEEEQ. A compositionally biased stretch (basic and acidic residues) spans 880–894; the sequence is PHTDHREHSPDHDPD. Serine 888 bears the Phosphoserine mark. 2 stretches are compositionally biased toward low complexity: residues 939 to 952 and 1047 to 1065; these read GAAN…AAAA and GDSP…SSAS. Residues 1117-1136 are compositionally biased toward gly residues; sequence SAGGTGATTGGGGATGGGGP. In terms of domain architecture, WAPL spans 1140–1648; it reads DRKTKDYYPV…EKYHTFMNLT (509 aa). The segment covering 1708–1730 has biased composition (low complexity); sequence TSSTTVGSGSAPSSTSATGTTRA.

This sequence belongs to the WAPL family.

Functionally, has a role in female meiotic chromosome segregation in females; proximal heterochromatin is involved in chromosome pairing during female meiosis. Is a dominant suppressor of both white and Stubble position-effect variegation (PEV), while it is a weak enhancer of brown variegation. The protein is Protein wings apart-like of Drosophila melanogaster (Fruit fly).